The primary structure comprises 143 residues: Regulator of ribonuclease activity B (143 aa).

Positions Glu-113–His-143 are disordered. Positions Pro-115–Asp-136 are enriched in acidic residues.

It belongs to the RraB family. Interacts with the C-terminal region of Rne.

It is found in the cytoplasm. Functionally, globally modulates RNA abundance by binding to RNase E (Rne) and regulating its endonucleolytic activity. Can modulate Rne action in a substrate-dependent manner by altering the composition of the degradosome. The chain is Regulator of ribonuclease activity B from Haemophilus ducreyi (strain 35000HP / ATCC 700724).